The chain runs to 552 residues: Carboxypeptidase Y homolog A (552 aa).

Positions 1 to 17 (MRVLPATLLVGAATAAT) are cleaved as a signal peptide. Positions 18 to 133 (PAQQVLGGLQ…KLEAYDLRIK (116 aa)) are excised as a propeptide. 5 disulfides stabilise this stretch: Cys-188–Cys-428, Cys-322–Cys-336, Cys-346–Cys-369, Cys-353–Cys-362, and Cys-391–Cys-398. Asn-219 is a glycosylation site (N-linked (GlcNAc...) asparagine). The active site involves Ser-275. Asp-467 is an active-site residue. The N-linked (GlcNAc...) asparagine glycan is linked to Asn-518. His-529 is an active-site residue.

This sequence belongs to the peptidase S10 family.

Its subcellular location is the vacuole. The catalysed reaction is Release of a C-terminal amino acid with broad specificity.. In terms of biological role, vacuolar carboxypeptidase involved in degradation of small peptides. Digests preferentially peptides containing an aliphatic or hydrophobic residue in P1' position, as well as methionine, leucine or phenylalanine in P1 position of ester substrate. The chain is Carboxypeptidase Y homolog A (cpyA) from Emericella nidulans (strain FGSC A4 / ATCC 38163 / CBS 112.46 / NRRL 194 / M139) (Aspergillus nidulans).